Here is a 274-residue protein sequence, read N- to C-terminus: Tropomyosin (274 aa).

The span at 1–35 (MKLEKDNAMDRADTLEQQNKEANNRAEKSEEEVHN) shows a compositional bias: basic and acidic residues. Residues 1–45 (MKLEKDNAMDRADTLEQQNKEANNRAEKSEEEVHNLQKRMQQLEN) form a disordered region. Residues 1-274 (MKLEKDNAMD…DQTFSELSGY (274 aa)) are a coiled coil.

This sequence belongs to the tropomyosin family. As to quaternary structure, homodimer.

Functionally, tropomyosin, in association with the troponin complex, plays a central role in the calcium dependent regulation of muscle contraction. This chain is Tropomyosin, found in Metapenaeus ensis (Greasyback shrimp).